The sequence spans 287 residues: Putative syntaxin-4 (287 aa).

Over 1 to 262 the chain is Cytoplasmic; it reads MHQISGINAA…NRKWKIVTCI (262 aa). The stretch at 65 to 97 forms a coiled coil; the sequence is KCRKLNDHVDKFIAQARGIRRRLADASEELVQY. In terms of domain architecture, t-SNARE coiled-coil homology spans 184-246; sequence FDDMKNRATD…EQAQQNVRQA (63 aa). A helical; Anchor for type IV membrane protein transmembrane segment spans residues 263 to 283; it reads ALIVLLLVVVYLLSHFLGAII. Residues 284-287 are Extracellular-facing; the sequence is PGWK.

It belongs to the syntaxin family.

Its subcellular location is the membrane. In terms of biological role, potentially involved in docking of synaptic vesicles at presynaptic active zones. This chain is Putative syntaxin-4 (syx-4), found in Caenorhabditis elegans.